A 243-amino-acid polypeptide reads, in one-letter code: tRNA (guanine-N(1)-)-methyltransferase (243 aa).

S-adenosyl-L-methionine-binding positions include Gly108 and 127–132; that span reads LGDFVL.

It belongs to the RNA methyltransferase TrmD family. As to quaternary structure, homodimer.

The protein localises to the cytoplasm. The enzyme catalyses guanosine(37) in tRNA + S-adenosyl-L-methionine = N(1)-methylguanosine(37) in tRNA + S-adenosyl-L-homocysteine + H(+). Specifically methylates guanosine-37 in various tRNAs. The polypeptide is tRNA (guanine-N(1)-)-methyltransferase (Streptococcus pyogenes serotype M2 (strain MGAS10270)).